A 630-amino-acid chain; its full sequence is Altered inheritance of mitochondria protein 9, mitochondrial (630 aa).

The transit peptide at 1 to 40 (MLKLTSRVGPKRLSSGLKSSSFKVNATIISKKFQSSLNSK) directs the protein to the mitochondrion.

It belongs to the AIM9 family.

It localises to the mitochondrion. This Debaryomyces hansenii (strain ATCC 36239 / CBS 767 / BCRC 21394 / JCM 1990 / NBRC 0083 / IGC 2968) (Yeast) protein is Altered inheritance of mitochondria protein 9, mitochondrial (AIM9).